The primary structure comprises 309 residues: Probable manganese-dependent inorganic pyrophosphatase (309 aa).

6 residues coordinate Mn(2+): His-9, Asp-13, Asp-15, Asp-75, His-97, and Asp-149.

Belongs to the PPase class C family. Mn(2+) is required as a cofactor.

Its subcellular location is the cytoplasm. The enzyme catalyses diphosphate + H2O = 2 phosphate + H(+). This is Probable manganese-dependent inorganic pyrophosphatase from Bacillus mycoides (strain KBAB4) (Bacillus weihenstephanensis).